A 220-amino-acid polypeptide reads, in one-letter code: Inner kinetochore subunit fta3 (220 aa).

This sequence belongs to the CENP-H/MCM16 family. In terms of assembly, component of the inner kinetochore constitutive centromere-associated network (CCAN) (also known as central kinetochore Sim4 complex in fission yeast), which is composed of at least cnl2, cnp3, cnp20, fta1, fta2, fta3, fta4, fta6, fta7, mal2, mhf1, mhf2, mis6, mis15, mis17, sim4 and wip1.

It is found in the nucleus. The protein localises to the chromosome. It localises to the centromere. Its subcellular location is the kinetochore. Component of the kinetochore, a multiprotein complex that assembles on centromeric DNA and attaches chromosomes to spindle microtubules, mediating chromosome segregation and sister chromatid segregation during meiosis and mitosis. Component of the inner kinetochore constitutive centromere-associated network (CCAN), which serves as a structural platform for outer kinetochore assembly. Fta2, fta3 and fta4 associate with the central core (cnt) and inner repeat (inr) region of the centromere. This is Inner kinetochore subunit fta3 (fta3) from Schizosaccharomyces pombe (strain 972 / ATCC 24843) (Fission yeast).